Consider the following 651-residue polypeptide: Acetyl-coenzyme A synthetase (651 aa).

CoA contacts are provided by residues 189–192, Thr311, and Asn335; that span reads RGGK. Residues 387-389, 411-416, Asp500, and Arg515 each bind ATP; these read GEP and DTWWQT. CoA is bound at residue Ser523. Arg526 is a binding site for ATP. Mg(2+)-binding residues include Val537, His539, and Val542. Arg584 serves as a coordination point for CoA. The residue at position 609 (Lys609) is an N6-acetyllysine.

The protein belongs to the ATP-dependent AMP-binding enzyme family. Mg(2+) is required as a cofactor. In terms of processing, acetylated. Deacetylation by the SIR2-homolog deacetylase activates the enzyme.

The enzyme catalyses acetate + ATP + CoA = acetyl-CoA + AMP + diphosphate. Catalyzes the conversion of acetate into acetyl-CoA (AcCoA), an essential intermediate at the junction of anabolic and catabolic pathways. AcsA undergoes a two-step reaction. In the first half reaction, AcsA combines acetate with ATP to form acetyl-adenylate (AcAMP) intermediate. In the second half reaction, it can then transfer the acetyl group from AcAMP to the sulfhydryl group of CoA, forming the product AcCoA. This Rhizobium etli (strain ATCC 51251 / DSM 11541 / JCM 21823 / NBRC 15573 / CFN 42) protein is Acetyl-coenzyme A synthetase.